Consider the following 206-residue polypeptide: Small ribosomal subunit protein uS4 (206 aa).

An S4 RNA-binding domain is found at Gly96–Lys156.

It belongs to the universal ribosomal protein uS4 family. As to quaternary structure, part of the 30S ribosomal subunit. Contacts protein S5. The interaction surface between S4 and S5 is involved in control of translational fidelity.

In terms of biological role, one of the primary rRNA binding proteins, it binds directly to 16S rRNA where it nucleates assembly of the body of the 30S subunit. With S5 and S12 plays an important role in translational accuracy. In Yersinia enterocolitica serotype O:8 / biotype 1B (strain NCTC 13174 / 8081), this protein is Small ribosomal subunit protein uS4.